The chain runs to 414 residues: Zinc metalloproteinase nas-26 (414 aa).

A signal peptide spans 1–20 (MTSSLVLILAPLALVAIGEA). A propeptide spanning residues 21-61 (AFGNSSKIFEIPGLEVMASDKYPHFTTIETVSRTKVHRHRR) is cleaved from the precursor. Asn-24 carries an N-linked (GlcNAc...) asparagine glycan. Positions 62–264 (EVIAGQIYDW…AKVINDIYCP (203 aa)) constitute a Peptidase M12A domain. Cystine bridges form between Cys-103–Cys-263, Cys-126–Cys-146, Cys-267–Cys-286, Cys-289–Cys-300, Cys-308–Cys-331, and Cys-358–Cys-378. Position 154 (His-154) interacts with Zn(2+). Glu-155 is an active-site residue. Residues His-158 and His-164 each coordinate Zn(2+). The 57-residue stretch at 251–307 (AFLDAKVINDIYCPNACQGRNHLNCLAGGYPDPNNCNVCRCPEGLGGPDCGRLQPSP) folds into the EGF-like domain. Residues 308–414 (CGGEIHASDQ…RFSLRFRRQA (107 aa)) form the CUB domain.

Requires Zn(2+) as cofactor.

It is found in the secreted. Metalloprotease. The sequence is that of Zinc metalloproteinase nas-26 (toh-1) from Caenorhabditis elegans.